The primary structure comprises 104 residues: Thioredoxin-2 (104 aa).

The Thioredoxin domain maps to valine 2–valine 104. Active-site nucleophile residues include cysteine 31 and cysteine 34. Cysteine 31 and cysteine 34 form a disulfide bridge. The residue at position 62 (serine 62) is a Phosphoserine. Residues lysine 67 and lysine 97 each participate in a glycyl lysine isopeptide (Lys-Gly) (interchain with G-Cter in ubiquitin) cross-link.

The protein belongs to the thioredoxin family. Monomer. Part of the heterodimeric LMA1 complex together with the proteinase inhibitor PBI2. LMA1 binds to the ATPase SEC18. Reversible disulfide bond formation between Cys-31 and Cys-34, reverted by thioredoxin reductase TRR1 using NADPH as hydrogen donor.

Its subcellular location is the cytoplasm. It is found in the golgi apparatus membrane. The protein resides in the nucleus. In terms of biological role, participates as a hydrogen donor in redox reactions through the reversible oxidation of its active center dithiol to a disulfide, accompanied by the transfer of 2 electrons and 2 protons. It is involved in many cellular processes, including deoxyribonucleotide synthesis, repair of oxidatively damaged proteins, protein folding, sulfur metabolism, and redox homeostasis. Thioredoxin-dependent enzymes include phosphoadenosine-phosphosulfate reductase MET16, alkyl-hydroperoxide reductase DOT5, thioredoxin peroxidases TSA1 and TSA2, alkyl hydroperoxide reductase AHP1, and peroxiredoxin HYR1. Thioredoxin is also involved in protection against reducing stress. As part of the LMA1 complex, it is involved in the facilitation of vesicle fusion such as homotypic vacuole and ER-derived COPII vesicle fusion with the Golgi. This activity does not require the redox mechanism. Through its capacity to inactivate the stress response transcription factor YAP1 and its regulator the hydroperoxide stress sensor HYR1, it is involved in feedback regulation of stress response gene expression upon oxidative stress. This is Thioredoxin-2 (TRX2) from Saccharomyces cerevisiae (strain ATCC 204508 / S288c) (Baker's yeast).